The following is a 339-amino-acid chain: Tetraacyldisaccharide 4'-kinase (339 aa).

58 to 65 (NVGGVGKT) is a binding site for ATP.

This sequence belongs to the LpxK family.

It carries out the reaction a lipid A disaccharide + ATP = a lipid IVA + ADP + H(+). It participates in glycolipid biosynthesis; lipid IV(A) biosynthesis; lipid IV(A) from (3R)-3-hydroxytetradecanoyl-[acyl-carrier-protein] and UDP-N-acetyl-alpha-D-glucosamine: step 6/6. Functionally, transfers the gamma-phosphate of ATP to the 4'-position of a tetraacyldisaccharide 1-phosphate intermediate (termed DS-1-P) to form tetraacyldisaccharide 1,4'-bis-phosphate (lipid IVA). This is Tetraacyldisaccharide 4'-kinase from Chromobacterium violaceum (strain ATCC 12472 / DSM 30191 / JCM 1249 / CCUG 213 / NBRC 12614 / NCIMB 9131 / NCTC 9757 / MK).